The chain runs to 276 residues: Large ribosomal subunit protein uL2 (276 aa).

2 disordered regions span residues 1 to 61 (MALK…HKQK) and 224 to 276 (AMNP…KKKN). Residues 15–31 (GRIDLRKDEITAQKPEK) show a composition bias toward basic and acidic residues.

It belongs to the universal ribosomal protein uL2 family. In terms of assembly, part of the 50S ribosomal subunit. Forms a bridge to the 30S subunit in the 70S ribosome.

Its function is as follows. One of the primary rRNA binding proteins. Required for association of the 30S and 50S subunits to form the 70S ribosome, for tRNA binding and peptide bond formation. It has been suggested to have peptidyltransferase activity; this is somewhat controversial. Makes several contacts with the 16S rRNA in the 70S ribosome. This is Large ribosomal subunit protein uL2 from Treponema denticola (strain ATCC 35405 / DSM 14222 / CIP 103919 / JCM 8153 / KCTC 15104).